We begin with the raw amino-acid sequence, 195 residues long: CASP-like protein Os03g0196400 (195 aa).

The Cytoplasmic segment spans residues M1–R38. A helical transmembrane segment spans residues A39–L59. At G60 to Q81 the chain is on the extracellular side. Residues S82 to A102 form a helical membrane-spanning segment. The Cytoplasmic portion of the chain corresponds to R103–C104. A helical membrane pass occupies residues L105–G125. The Extracellular portion of the chain corresponds to K126–G150. The helical transmembrane segment at G151 to F171 threads the bilayer. Residues N172–K195 are Cytoplasmic-facing.

This sequence belongs to the Casparian strip membrane proteins (CASP) family. Homodimer and heterodimers.

It is found in the cell membrane. The protein is CASP-like protein Os03g0196400 of Oryza sativa subsp. japonica (Rice).